A 340-amino-acid polypeptide reads, in one-letter code: MAVTMYYEEDVEVAALAGKKIAVIGYGSQGHAHAQNLRDSGHDVIIGVRQGKSFDKAKEDGFETFEVGEAVAKADVIMVLAPDELQQSIYEEDIKPNLKAGSALGFAHGFNIHFGYIEVPEDVDVFMVAPKAPGHLVRRTFTEGFGTPALFVSHQNATGHAREIAMDWAKGIGCARVGIIETTFKEETEEDLFGEQAVLCGGLTALVEAGFETLTEAGYAGELAYFEVLHEMKLIVDLMYEGGFTKMRQSISNTAEFGDYVTGPRIITDEVKKNMKLVLADIQSGKFAQDFVDDFKAGRPKLTAYREAAKNLEIEKIGAELRKAMPFTQSGDDDAFKIYQ.

Residues 3-182 enclose the KARI N-terminal Rossmann domain; that stretch reads VTMYYEEDVE…GCARVGIIET (180 aa). Residues 26–29, R49, S53, and 83–86 contribute to the NADP(+) site; these read YGSQ and DELQ. The active site involves H108. G134 contacts NADP(+). In terms of domain architecture, KARI C-terminal knotted spans 183 to 328; the sequence is TFKEETEEDL…AELRKAMPFT (146 aa). 4 residues coordinate Mg(2+): D191, E195, E227, and E231. S252 contributes to the substrate binding site.

Belongs to the ketol-acid reductoisomerase family. It depends on Mg(2+) as a cofactor.

The catalysed reaction is (2R)-2,3-dihydroxy-3-methylbutanoate + NADP(+) = (2S)-2-acetolactate + NADPH + H(+). The enzyme catalyses (2R,3R)-2,3-dihydroxy-3-methylpentanoate + NADP(+) = (S)-2-ethyl-2-hydroxy-3-oxobutanoate + NADPH + H(+). Its pathway is amino-acid biosynthesis; L-isoleucine biosynthesis; L-isoleucine from 2-oxobutanoate: step 2/4. It functions in the pathway amino-acid biosynthesis; L-valine biosynthesis; L-valine from pyruvate: step 2/4. Involved in the biosynthesis of branched-chain amino acids (BCAA). Catalyzes an alkyl-migration followed by a ketol-acid reduction of (S)-2-acetolactate (S2AL) to yield (R)-2,3-dihydroxy-isovalerate. In the isomerase reaction, S2AL is rearranged via a Mg-dependent methyl migration to produce 3-hydroxy-3-methyl-2-ketobutyrate (HMKB). In the reductase reaction, this 2-ketoacid undergoes a metal-dependent reduction by NADPH to yield (R)-2,3-dihydroxy-isovalerate. The chain is Ketol-acid reductoisomerase (NADP(+)) from Lactococcus lactis subsp. cremoris (strain MG1363).